A 251-amino-acid chain; its full sequence is DNA repair protein RecO (251 aa).

The protein belongs to the RecO family.

Involved in DNA repair and RecF pathway recombination. This Lactococcus lactis subsp. cremoris (strain SK11) protein is DNA repair protein RecO.